Here is a 674-residue protein sequence, read N- to C-terminus: Carbon monoxide dehydrogenase/acetyl-CoA synthase subunit beta (674 aa).

The segment at 1–25 is disordered; the sequence is MPRFRDLSHNCRPSEAPRVMEPKNR. Residues C59, C67, C68, C71, C76, and C90 each contribute to the [4Fe-4S] cluster site. Residues H283, C317, C355, C470, C500, and C550 each coordinate [Ni-4Fe-4S] cluster.

In terms of assembly, tetramer of two alpha and two beta chains. Requires [Ni-Fe-S] cluster as cofactor. It depends on [4Fe-4S] cluster as a cofactor.

It carries out the reaction CO + 2 oxidized [2Fe-2S]-[ferredoxin] + H2O = 2 reduced [2Fe-2S]-[ferredoxin] + CO2 + 2 H(+). Its function is as follows. The beta subunit (this protein) generates CO from CO(2), while the alpha subunit combines the CO with CoA and a methyl group to form acetyl-CoA. The methyl group, which is incorporated into acetyl-CoA, is transferred to the alpha subunit by a corrinoid iron-sulfur protein. This is Carbon monoxide dehydrogenase/acetyl-CoA synthase subunit beta from Moorella thermoacetica (Clostridium thermoaceticum).